Here is a 119-residue protein sequence, read N- to C-terminus: Toxin ICK-9 (119 aa).

The first 19 residues, 1 to 19 (MMKLYSLVIIATLAAAAFA), serve as a signal peptide directing secretion. 4 disulfides stabilise this stretch: cysteine 59-cysteine 74, cysteine 67-cysteine 80, cysteine 71-cysteine 116, and cysteine 73-cysteine 87.

It belongs to the neurotoxin 25 family. ICK-8 subfamily. In terms of tissue distribution, expressed by the venom gland.

The protein resides in the secreted. Ion channel inhibitor. This chain is Toxin ICK-9, found in Trittame loki (Brush-footed trapdoor spider).